Reading from the N-terminus, the 788-residue chain is Protein translocase subunit SecA 2 (788 aa).

ATP contacts are provided by residues glutamine 86, 104–108 (GEGKT), and aspartate 493.

Belongs to the SecA family. As to quaternary structure, monomer and homodimer. Part of the essential Sec protein translocation apparatus which comprises SecA, SecYEG and auxiliary proteins SecDF. Other proteins may also be involved.

It is found in the cell membrane. The protein resides in the cytoplasm. The catalysed reaction is ATP + H2O + cellular proteinSide 1 = ADP + phosphate + cellular proteinSide 2.. Functionally, part of the Sec protein translocase complex. Interacts with the SecYEG preprotein conducting channel. Has a central role in coupling the hydrolysis of ATP to the transfer of proteins into and across the cell membrane, serving as an ATP-driven molecular motor driving the stepwise translocation of polypeptide chains across the membrane. This Geobacillus thermodenitrificans (strain NG80-2) protein is Protein translocase subunit SecA 2.